We begin with the raw amino-acid sequence, 82 residues long: Cytochrome c-551 (82 aa).

Heme c is bound by residues Cys-12, Cys-15, His-16, and Met-61.

Binds 1 heme c group covalently per subunit.

Functionally, this is a prokaryotic monoheme cytochrome, unreactive with mitochondrial cytochrome C oxidase or reductase. It functions in nitrite and nitrate respiration in Pseudomonas, but it is also found in other bacteria. The sequence is that of Cytochrome c-551 from Pseudomonas denitrificans.